We begin with the raw amino-acid sequence, 200 residues long: LHFPL tetraspan subfamily member 6 protein (200 aa).

The first 21 residues, methionine 1–alanine 21, serve as a signal peptide directing secretion. 3 consecutive transmembrane segments (helical) span residues isoleucine 84–leucine 104, glycine 123–tryptophan 143, and isoleucine 166–tryptophan 186.

The protein belongs to the LHFP family. Pancreas, kidney, skeletal muscle, liver, lung brain, heart, colon, small intestine, uterus, testis, prostate, thymus, spleen and placenta.

Its subcellular location is the membrane. The sequence is that of LHFPL tetraspan subfamily member 6 protein from Homo sapiens (Human).